Here is a 226-residue protein sequence, read N- to C-terminus: LexA repressor (226 aa).

The H-T-H motif DNA-binding region spans 42–62 (MREIGDAVGLASLSSVTHQLN). Catalysis depends on for autocatalytic cleavage activity residues Ser-150 and Lys-187.

It belongs to the peptidase S24 family. In terms of assembly, homodimer.

The catalysed reaction is Hydrolysis of Ala-|-Gly bond in repressor LexA.. Functionally, represses a number of genes involved in the response to DNA damage (SOS response), including recA and lexA. In the presence of single-stranded DNA, RecA interacts with LexA causing an autocatalytic cleavage which disrupts the DNA-binding part of LexA, leading to derepression of the SOS regulon and eventually DNA repair. The sequence is that of LexA repressor from Clavibacter sepedonicus (Clavibacter michiganensis subsp. sepedonicus).